The primary structure comprises 328 residues: D-cysteine desulfhydrase (328 aa).

Lys51 carries the N6-(pyridoxal phosphate)lysine modification.

It belongs to the ACC deaminase/D-cysteine desulfhydrase family. As to quaternary structure, homodimer. It depends on pyridoxal 5'-phosphate as a cofactor.

It carries out the reaction D-cysteine + H2O = hydrogen sulfide + pyruvate + NH4(+) + H(+). Its function is as follows. Catalyzes the alpha,beta-elimination reaction of D-cysteine and of several D-cysteine derivatives. It could be a defense mechanism against D-cysteine. The protein is D-cysteine desulfhydrase of Escherichia coli O9:H4 (strain HS).